Here is a 318-residue protein sequence, read N- to C-terminus: MSAAAGPKVAFFASPAFALPVLEALRAEFEVVLVVAQPDKPVGRGLKLTPPPVAARAAELGLPLAQPHKLRGNADFAAQLRDSGADVAVTCAYGKILPAGVLEIPRFGFLNTHTSLLPRYRGAAPIQWALIRGETVTGTTIMQTDEGMDTGPVLLQEELPIRPEWTSVELSAALSEQAAALIVRALRTLETLTPQPQDEAQATHAPLLVKEDGFVRWADPAQAVLDRFRGVAAWPQTTAFFGGKRLKLAGLTLGQGKGQPGKVLQVGAGGLTVACGEGAVCIATVQPEAKKAQPAQVWAQGQNVEQGARFDLWEPPQG.

115-118 (SLLP) serves as a coordination point for (6S)-5,6,7,8-tetrahydrofolate.

This sequence belongs to the Fmt family.

The catalysed reaction is L-methionyl-tRNA(fMet) + (6R)-10-formyltetrahydrofolate = N-formyl-L-methionyl-tRNA(fMet) + (6S)-5,6,7,8-tetrahydrofolate + H(+). Functionally, attaches a formyl group to the free amino group of methionyl-tRNA(fMet). The formyl group appears to play a dual role in the initiator identity of N-formylmethionyl-tRNA by promoting its recognition by IF2 and preventing the misappropriation of this tRNA by the elongation apparatus. This Deinococcus radiodurans (strain ATCC 13939 / DSM 20539 / JCM 16871 / CCUG 27074 / LMG 4051 / NBRC 15346 / NCIMB 9279 / VKM B-1422 / R1) protein is Methionyl-tRNA formyltransferase.